Reading from the N-terminus, the 613-residue chain is YTH domain-containing family protein 2 (613 aa).

Disordered regions lie at residues 1–43, 215–234, and 244–396; these read MSAS…AQPR, SQVS…AKTA, and AKPQ…TVPA. The tract at residues 2-397 is localization to mRNA processing bodies (P-bodies); it reads SASSLLEQRP…GMGGITVPAE (396 aa). A compositionally biased stretch (polar residues) spans 16–27; sequence NKVQNGAVTQKD. 3 stretches are compositionally biased toward low complexity: residues 218-234, 295-307, and 345-360; these read STAP…AKTA, NGQP…PQPG, and PPQL…PSQP. Residues 398 to 613 form an interaction with m6A-containing mRNAs region; the sequence is PHPVLEKLRM…RMQDRQGRVK (216 aa). One can recognise a YTH domain in the interval 423–557; the sequence is GRVFIIKSYS…DKARQVLKII (135 aa). Residues 429 to 431, aspartate 435, 445 to 446, asparagine 475, tryptophan 499, and tryptophan 504 contribute to the RNA site; these read KSY and WC. Composition is skewed to basic and acidic residues over residues 578–587 and 604–613; these read EEEESVKKVE and RMQDRQGRVK. The segment at 578–613 is disordered; that stretch reads EEEESVKKVEVQGSDPYSNNSSRSHYRMQDRQGRVK.

The protein belongs to the YTHDF family. YTHDF2 subfamily.

It is found in the cytoplasm. Its subcellular location is the cytosol. The protein resides in the P-body. It localises to the stress granule. The protein localises to the nucleus. Functionally, specifically recognizes and binds N6-methyladenosine (m6A)-containing RNAs, and regulates their stability. M6A is a modification present at internal sites of mRNAs and some non-coding RNAs and plays a role in mRNA stability and processing. Acts as a regulator of mRNA stability by promoting degradation of m6A-containing mRNAs. The YTHDF paralogs (ythdf1, ythdf2 and ythdf3) share m6A-containing mRNAs targets and act redundantly to mediate mRNA degradation and cellular differentiation. Plays a key role in maternal-to-zygotic transition during early embryonic development, the process during which maternally inherited mRNAs are degraded: acts by binding m6A-containing maternal mRNAs and promoting their degradation. More than one-third of maternal mRNAs can be modified by m6A. Binding to m6A-containing mRNAs results in mRNA degradation. Also involved in hematopoietic stem cells specification by binding to m6A-containing mRNAs, such as notch1a, and promote their degradation. The decreased Notch signaling following notch1a degradation promotes endothelial to hematopoietic transition. Promotes formation of phase-separated membraneless compartments, such as P-bodies or stress granules, by undergoing liquid-liquid phase separation upon binding to mRNAs containing multiple m6A-modified residues: polymethylated mRNAs act as a multivalent scaffold for the binding of YTHDF proteins, juxtaposing their disordered regions and thereby leading to phase separation. The resulting mRNA-YTHDF complexes then partition into different endogenous phase-separated membraneless compartments, such as P-bodies, stress granules or neuronal RNA granules. This chain is YTH domain-containing family protein 2, found in Danio rerio (Zebrafish).